Reading from the N-terminus, the 676-residue chain is DNA ligase (676 aa).

NAD(+) is bound by residues 34–38 (DAEYD), 84–85 (SL), and E116. Catalysis depends on K118, which acts as the N6-AMP-lysine intermediate. NAD(+) contacts are provided by R139, E174, K294, and K318. Zn(2+) is bound by residues C412, C415, C428, and C433. One can recognise a BRCT domain in the interval 589 to 676 (KGGEALKGLT…RTGKKAEELV (88 aa)).

It belongs to the NAD-dependent DNA ligase family. LigA subfamily. The cofactor is Mg(2+). Mn(2+) serves as cofactor.

The catalysed reaction is NAD(+) + (deoxyribonucleotide)n-3'-hydroxyl + 5'-phospho-(deoxyribonucleotide)m = (deoxyribonucleotide)n+m + AMP + beta-nicotinamide D-nucleotide.. DNA ligase that catalyzes the formation of phosphodiester linkages between 5'-phosphoryl and 3'-hydroxyl groups in double-stranded DNA using NAD as a coenzyme and as the energy source for the reaction. It is essential for DNA replication and repair of damaged DNA. The polypeptide is DNA ligase (Thermus thermophilus (strain ATCC 27634 / DSM 579 / HB8)).